Consider the following 316-residue polypeptide: MSDISKASLPKAIFLMGPTASGKTALAIELRKILPVELISVDSALIYKGMDIGTAKPNAEELLAAPHRLLNIRDPSQAYSAADFRRDALAEMADITAAGRIPLLVGGTMLYFKALLEGLSPLPSADPEVRARIEQQAAEQGWESLHRQLQEVDPVAAARIHPNDPQRLSRALEVFFISGKTLTELTQTSGDALPYQVHQFAIAPASRELLHQRIEQRFHQMLASGFEAEVRALFARGDLHTDLPSIRCVGYRQMWSYLEGEISYDEMVYRGVCATRQLAKRQITWLRGWEGVHWLDSEKPEQARDEVLQVVGAIAG.

17–24 (GPTASGKT) contacts ATP. 19 to 24 (TASGKT) serves as a coordination point for substrate. Interaction with substrate tRNA stretches follow at residues 42–45 (DSAL), 166–170 (QRLSR), 247–252 (RCVGYR), and 280–287 (KRQITWLR).

It belongs to the IPP transferase family. Monomer. The cofactor is Mg(2+).

The enzyme catalyses adenosine(37) in tRNA + dimethylallyl diphosphate = N(6)-dimethylallyladenosine(37) in tRNA + diphosphate. Its function is as follows. Catalyzes the transfer of a dimethylallyl group onto the adenine at position 37 in tRNAs that read codons beginning with uridine, leading to the formation of N6-(dimethylallyl)adenosine (i(6)A). The polypeptide is tRNA dimethylallyltransferase (Escherichia coli O45:K1 (strain S88 / ExPEC)).